The chain runs to 74 residues: Pelophylaxin-3 (74 aa).

Residues 1–22 form the signal peptide; that stretch reads MFTLKKSLLLVFFLGTISLSLC. A propeptide spanning residues 23-39 is cleaved from the precursor; the sequence is EDERNADEDDGEMTEEV. An intrachain disulfide couples C68 to C74.

As to expression, expressed by the skin glands.

It is found in the secreted. Its function is as follows. Antimicrobial peptide. In Pelophylax fukienensis (Fukien gold-striped pond frog), this protein is Pelophylaxin-3.